A 300-amino-acid polypeptide reads, in one-letter code: Meiotically up-regulated gene 165 protein (300 aa).

Disordered stretches follow at residues 1 to 38 and 50 to 109; these read MLEK…HKPS and TNSS…STLE. The span at 21–38 shows a compositional bias: polar residues; the sequence is ESHTFSSQTDDSYFHKPS. The span at 52 to 69 shows a compositional bias: low complexity; sequence SSVPSASRSPESIASSQS. Over residues 94 to 103 the composition is skewed to basic residues; it reads TLRKRGRKPK.

It is found in the nucleus. In terms of biological role, has a role in meiosis. This chain is Meiotically up-regulated gene 165 protein (mug165), found in Schizosaccharomyces pombe (strain 972 / ATCC 24843) (Fission yeast).